The chain runs to 244 residues: Probable cytokinin riboside 5'-monophosphate phosphoribohydrolase LOGL2 (244 aa).

Substrate contacts are provided by residues Glu91, 109–110 (RK), and 126–132 (GYGTLEE).

It belongs to the LOG family.

The catalysed reaction is N(6)-(dimethylallyl)adenosine 5'-phosphate + H2O = N(6)-dimethylallyladenine + D-ribose 5-phosphate. It carries out the reaction 9-ribosyl-trans-zeatin 5'-phosphate + H2O = trans-zeatin + D-ribose 5-phosphate. Cytokinin-activating enzyme working in the direct activation pathway. Phosphoribohydrolase that converts inactive cytokinin nucleotides to the biologically active free-base forms. The sequence is that of Probable cytokinin riboside 5'-monophosphate phosphoribohydrolase LOGL2 (LOGL2) from Oryza sativa subsp. japonica (Rice).